The sequence spans 265 residues: Thiazole synthase (265 aa).

The active-site Schiff-base intermediate with DXP is the K106. 1-deoxy-D-xylulose 5-phosphate contacts are provided by residues G167, 193 to 194 (AG), and 215 to 216 (NS).

This sequence belongs to the ThiG family. In terms of assembly, homotetramer. Forms heterodimers with either ThiH or ThiS.

The protein resides in the cytoplasm. The enzyme catalyses [ThiS sulfur-carrier protein]-C-terminal-Gly-aminoethanethioate + 2-iminoacetate + 1-deoxy-D-xylulose 5-phosphate = [ThiS sulfur-carrier protein]-C-terminal Gly-Gly + 2-[(2R,5Z)-2-carboxy-4-methylthiazol-5(2H)-ylidene]ethyl phosphate + 2 H2O + H(+). It participates in cofactor biosynthesis; thiamine diphosphate biosynthesis. Catalyzes the rearrangement of 1-deoxy-D-xylulose 5-phosphate (DXP) to produce the thiazole phosphate moiety of thiamine. Sulfur is provided by the thiocarboxylate moiety of the carrier protein ThiS. In vitro, sulfur can be provided by H(2)S. This is Thiazole synthase from Prochlorococcus marinus (strain MIT 9515).